Consider the following 330-residue polypeptide: Protein pelota homolog (330 aa).

It belongs to the eukaryotic release factor 1 family. Pelota subfamily. In terms of assembly, monomer. A divalent metal cation is required as a cofactor.

It localises to the cytoplasm. Its function is as follows. May function in recognizing stalled ribosomes, interact with stem-loop structures in stalled mRNA molecules, and effect endonucleolytic cleavage of the mRNA. May play a role in the release non-functional ribosomes and degradation of damaged mRNAs. Has endoribonuclease activity. The polypeptide is Protein pelota homolog (Pyrobaculum islandicum (strain DSM 4184 / JCM 9189 / GEO3)).